The following is a 1183-amino-acid chain: RecQ-like DNA helicase BLM (1183 aa).

The disordered stretch occupies residues 1–109 (MEEARAATNG…AAEQDSSAEH (109 aa)). Over residues 14–27 (ESQKLSNGEKSSQL) the composition is skewed to polar residues. Positions 38–48 (ADIELEEDDYL) are enriched in acidic residues. Residues 110–162 (ADKGLHLEQQLYSVMEDICKLVDAIPLHELTSISCAKELLQQRELRRKLLADS) are necessary for dimerization and homooligomerization. 3 disordered regions span residues 164–215 (ALNT…LPSV), 260–323 (PKVN…GCWD), and 381–408 (GSAP…PLVH). Polar residues-rich tracts occupy residues 206 to 215 (TPKSTNLPSV) and 265 to 280 (KGST…SFNG). ATP contacts are provided by residues 439 to 443 (FRTNQ) and 463 to 467 (GGGKS). In terms of domain architecture, Helicase ATP-binding spans 447–622 (INAALLGEDC…QNQLEMLKPQ (176 aa)). Residues 566-569 (DEAH) carry the DEAH box motif. 2 3' overhang DNA-binding regions span residues 641-644 (KPKK) and 668-670 (SRH). The region spanning 648 to 795 (DCLEWIKKYH…TRQTHFNNLY (148 aa)) is the Helicase C-terminal domain. Arg-753 contributes to the ATP binding site. Residues 771 to 774 (RLRR) form a 3' overhang DNA-binding region. Zn(2+)-binding residues include Cys-807, Cys-826, Cys-834, and Cys-837. The tract at residues 865-910 (QVGGINGNRNTGSGRYTLNMMVDIFLGAKSAKIQSGIFGKGAAYSR) is DNA Holliday junction binding. 3 3' overhang DNA-binding regions span residues 881-883 (TLN), 892-896 (AKSAK), and 931-937 (YITANDQ). Residues 983–1063 (EEMVKKCLGE…DKYSEWTTPE (81 aa)) enclose the HRDC domain. The interval 998–1015 (KTLGKIFDVHYFNIFSTS) is necessary for ssDNA and DNA Holliday junction binding. A disordered region spans residues 1068 to 1183 (QSVDTAPGSA…HFLQPSYAVL (116 aa)). The segment covering 1091-1101 (VTSSYFGGNAN) has biased composition (polar residues). The short motif at 1104–1120 (RKRKRLPNSGESKRKKT) is the Nuclear localization signal element. Residues 1133 to 1142 (ARYRRARRAP) are compositionally biased toward basic residues. Positions 1143-1158 (GSRAAAPAQSSALRGA) are enriched in low complexity.

Belongs to the helicase family. RecQ subfamily. In terms of assembly, monomer. Homodimer (via N-terminus). Homotetramer (via N-terminus); dimer of dimers. Homohexamer (via N-terminus). Self-association negatively regulates DNA unwinding amplitude and rate. Oligomer complexes dissociate into monomer in presence of ATP. Zn(2+) serves as cofactor.

It is found in the nucleus. It catalyses the reaction Couples ATP hydrolysis with the unwinding of duplex DNA by translocating in the 3'-5' direction.. It carries out the reaction ATP + H2O = ADP + phosphate + H(+). Its function is as follows. ATP-dependent DNA helicase that unwinds single- and double-stranded DNA in a 3'-5' direction. Participates in DNA replication and repair. Involved in 5'-end resection of DNA during double-strand break (DSB) repair. Negatively regulates sister chromatid exchange (SCE). Stimulates DNA 4-way junction branch migration and DNA Holliday junction dissolution. Binds DNA. Binds single-stranded DNA (ssDNA), forked duplex DNA and DNA Holliday junction. The protein is RecQ-like DNA helicase BLM (BLM) of Gallus gallus (Chicken).